Here is a 459-residue protein sequence, read N- to C-terminus: Exodeoxyribonuclease 7 large subunit (459 aa).

Belongs to the XseA family. As to quaternary structure, heterooligomer composed of large and small subunits.

It localises to the cytoplasm. It carries out the reaction Exonucleolytic cleavage in either 5'- to 3'- or 3'- to 5'-direction to yield nucleoside 5'-phosphates.. Its function is as follows. Bidirectionally degrades single-stranded DNA into large acid-insoluble oligonucleotides, which are then degraded further into small acid-soluble oligonucleotides. In Yersinia pseudotuberculosis serotype IB (strain PB1/+), this protein is Exodeoxyribonuclease 7 large subunit.